We begin with the raw amino-acid sequence, 300 residues long: Ribosomal protein L11 methyltransferase (300 aa).

S-adenosyl-L-methionine-binding residues include Thr152, Gly173, Asp195, and Asn234.

It belongs to the methyltransferase superfamily. PrmA family.

It localises to the cytoplasm. It carries out the reaction L-lysyl-[protein] + 3 S-adenosyl-L-methionine = N(6),N(6),N(6)-trimethyl-L-lysyl-[protein] + 3 S-adenosyl-L-homocysteine + 3 H(+). Its function is as follows. Methylates ribosomal protein L11. In Burkholderia mallei (strain NCTC 10247), this protein is Ribosomal protein L11 methyltransferase.